Here is a 490-residue protein sequence, read N- to C-terminus: Patellin-3 (490 aa).

Residues 1–17 show a composition bias toward low complexity; that stretch reads MAEEPTTTTLVTPEKLP. A disordered region spans residues 1–121; that stretch reads MAEEPTTTTL…ESSKLSDLSN (121 aa). N-acetylalanine is present on A2. The segment covering 19 to 33 has biased composition (polar residues); that stretch reads PSLTPSEVSESTQDA. Residues 46–56 are compositionally biased toward low complexity; it reads ETNPPETADTT. 2 stretches are compositionally biased toward basic and acidic residues: residues 57–69 and 79–100; these read TKPEEETAAEHHP and STEKQEVKDEASQKEVAEEKKS. S108 is modified (phosphoserine). The segment covering 109-121 has biased composition (basic and acidic residues); it reads FKEESSKLSDLSN. A Glycyl lysine isopeptide (Lys-Gly) (interchain with G-Cter in ubiquitin) cross-link involves residue K193. The CRAL-TRIO domain occupies 202-377; it reads EEDLVDDLDK…QYGGLSVDPC (176 aa). Residues 353–487 form the GOLD domain; sequence AETLFKYISP…KKKLVYRFNV (135 aa).

This sequence belongs to the patellin family.

It localises to the membrane. It is found in the cytoplasm. Its function is as follows. Carrier protein that may be involved in membrane-trafficking events associated with cell plate formation during cytokinesis. Binds to some hydrophobic molecules such as phosphoinositides and promotes their transfer between the different cellular sites. This chain is Patellin-3 (PATL3), found in Arabidopsis thaliana (Mouse-ear cress).